The sequence spans 444 residues: MVKFRFAPSPTGHLHAGNARLAVVNALAARAMGGTLLLRIDDTDRERSKPEYEAGIEQDLRWLGIGWDEMARQSDRMDRYAAAAERLKAAGLLYPCFESEEELAAKRALRAKRHLPPVYDRAMLSLTAEQRAAAEAGGKRPYFRFKLSDGAVAWNDLVLGRREVALGTVSDPVLIRADGTPLYTFTSVVDDLELGVTHVVRGEDHVTNTAVQIDLMRALEPRRAVPAFGHLPLISDVTGEKLSKRAGSVSVRQFRRDGIEAMALVSYLARLGSRRDPEPLTLEELAGTFDLGDFSRGAPRFDPKQLLALNRRVLHGLPFEAVAERLPEGCGAEFWMAVRGNLDLLSEARLWWEVVSGEIETPSLPEAASLLRAALEALPPEPWDETTWKGWTGAVAAASGARGKALYLPLRLALTGESHGPELAALLPLIGRARAAARLERAAG.

The 'HIGH' region signature appears at 8 to 18 (PSPTGHLHAGN). Positions 241–245 (KLSKR) match the 'KMSKS' region motif. K244 lines the ATP pocket.

Belongs to the class-I aminoacyl-tRNA synthetase family. Glutamate--tRNA ligase type 1 subfamily. In terms of assembly, monomer.

Its subcellular location is the cytoplasm. It catalyses the reaction tRNA(Glu) + L-glutamate + ATP = L-glutamyl-tRNA(Glu) + AMP + diphosphate. Its function is as follows. Catalyzes the attachment of glutamate to tRNA(Glu) in a two-step reaction: glutamate is first activated by ATP to form Glu-AMP and then transferred to the acceptor end of tRNA(Glu). The chain is Glutamate--tRNA ligase 2 from Acidiphilium cryptum (strain JF-5).